Here is a 206-residue protein sequence, read N- to C-terminus: Shieldin complex subunit 1 (206 aa).

A disordered region spans residues 27–94 (SSYEASQRVS…GQLETNEEED (68 aa)). The segment covering 32 to 55 (SQRVSQGSSNSLSSLESHPFLSSS) has biased composition (low complexity). Over residues 56–74 (TTDPDSNSLNTEQKGSWDS) the composition is skewed to polar residues.

In terms of assembly, component of the shieldin complex, consisting of SHLD1, SHLD2, SHLD3 and MAD2L2/REV7. Within the complex, SHLD2 forms a scaffold which interacts with a SHLD3-MAD2L2 subcomplex via its N-terminus, and with SHLD1 via its C-terminus. Interacts with ASTE1.

The protein resides in the chromosome. Functionally, component of the shieldin complex, which plays an important role in repair of DNA double-stranded breaks (DSBs). During G1 and S phase of the cell cycle, the complex functions downstream of TP53BP1 to promote non-homologous end joining (NHEJ) and suppress DNA end resection. Mediates various NHEJ-dependent processes including immunoglobulin class-switch recombination, and fusion of unprotected telomeres. This is Shieldin complex subunit 1 from Mus musculus (Mouse).